The chain runs to 660 residues: Solute carrier family 5 member 4 (660 aa).

Residues 1–28 (MASTLSPSTVTKTPGPPEISERIQNAAD) are Cytoplasmic-facing. Residues 29–47 (ISVIVIYFVVVMAVGLWAM) traverse the membrane as a helical segment. The Extracellular segment spans residues 48-64 (LRTNRGTVGGFFLAGRD). A helical membrane pass occupies residues 65–85 (VTWWPMGASLFASNIGSGHFV). The Cytoplasmic portion of the chain corresponds to 86 to 105 (GLAGTGAASGIAIAAFEWNA). Residues 106–126 (LLLLLVLGWFFVPIYIKAGVM) form a helical membrane-spanning segment. Residues 127-171 (TMPEYLRKRFGGKRLQIYLSILSLFICVALRISSDIFSGAIFIKL) are Extracellular-facing. A helical membrane pass occupies residues 172–191 (ALGLDLYLAIFSLLAITAIY). Over 192–208 (TITGGLASVIYTDTLQT) the chain is Cytoplasmic. The helical transmembrane segment at 209–229 (IIMLIGSFILMGFAFVEVGGY) threads the bilayer. Residues 230–270 (ESFTEKYMNAIPTIVEGDNLTISPKCYTPQGDSFHIFRDAV) are Extracellular-facing. N-linked (GlcNAc...) asparagine glycosylation occurs at N248. Residues 271–291 (TGDIPWPGMIFGMTVVAAWYW) traverse the membrane as a helical segment. The Cytoplasmic portion of the chain corresponds to 292 to 314 (CTDQVIVQRCLSGKDMSHVKAAC). The helical transmembrane segment at 315-334 (IMCGYLKLLPMFLMVMPGMI) threads the bilayer. Over 335–423 (SRILYTEKVA…RKQASEKELL (89 aa)) the chain is Extracellular. Residues 424–443 (IAGRLFIILLIVISIVWVPL) traverse the membrane as a helical segment. Over 444–455 (VQVAQNGQLFHY) the chain is Cytoplasmic. A helical transmembrane segment spans residues 456-476 (IESISSYLGPPIAAVFLLAIF). The Extracellular portion of the chain corresponds to 477-526 (CKRVNEQGAFWGLIIGFVMGLIRMIAEFVYGTGSCLAASNCPQIICGVHY). A helical membrane pass occupies residues 527 to 547 (LYFALILFFVSILVVLAISLL). Over 548–638 (TKPIPDVHLY…TDTSEKPLWK (91 aa)) the chain is Cytoplasmic. The helical transmembrane segment at 639–659 (TIVNINAILLLAVAVFVHGYF) threads the bilayer.

Belongs to the sodium:solute symporter (SSF) (TC 2.A.21) family. As to expression, kidney, intestine, liver, skeletal muscle and spleen.

Its subcellular location is the cell membrane. The enzyme catalyses D-glucose(out) + 2 Na(+)(out) = D-glucose(in) + 2 Na(+)(in). With respect to regulation, inhibited by phlorizin. Functionally, low-affinity sodium/D-glucose symporter with a great selectivity for sugars (D-glucose &gt;&gt; D-galactose). Na(+) and D-glucose transport are tightly coupled at neutral pH, but at acidic pH, ion transport is uncoupled from sugar transport. The chain is Solute carrier family 5 member 4 from Sus scrofa (Pig).